Reading from the N-terminus, the 891-residue chain is UPF0182 protein Glov_0814 (891 aa).

The next 7 membrane-spanning stretches (helical) occupy residues Leu-6–Tyr-26, Gly-51–Ala-71, Ile-102–Trp-122, Phe-164–Ala-184, Ile-202–Leu-222, Thr-244–Trp-264, and Gly-266–Met-286.

The protein belongs to the UPF0182 family.

The protein localises to the cell membrane. This chain is UPF0182 protein Glov_0814, found in Trichlorobacter lovleyi (strain ATCC BAA-1151 / DSM 17278 / SZ) (Geobacter lovleyi).